The sequence spans 487 residues: Cytochrome P450 716A75 (487 aa).

Residues 5–25 form a helical membrane-spanning segment; the sequence is FVSLLSLFLLILLPLSLLFLF. Cys-434 lines the heme pocket.

Belongs to the cytochrome P450 family. Heme serves as cofactor.

It localises to the membrane. The catalysed reaction is beta-amyrin + reduced [NADPH--hemoprotein reductase] + O2 = erythrodiol + oxidized [NADPH--hemoprotein reductase] + H2O + H(+). It carries out the reaction erythrodiol + reduced [NADPH--hemoprotein reductase] + O2 = oleanolic aldehyde + oxidized [NADPH--hemoprotein reductase] + 2 H2O + H(+). The enzyme catalyses oleanolic aldehyde + reduced [NADPH--hemoprotein reductase] + O2 = oleanolate + oxidized [NADPH--hemoprotein reductase] + H2O + 2 H(+). In terms of biological role, catalyzes the C-28 oxidation of beta-amyrin to form erythrodiol. Catalyzes the C-28 oxidation of erythrodiol to form oleanolic aldehyde. Catalyzes the C-28 oxidation of oleanolic aldehyde to form oleanolate. The sequence is that of Cytochrome P450 716A75 from Maesa lanceolata (False assegai).